A 243-amino-acid chain; its full sequence is Carboxy-S-adenosyl-L-methionine synthase (243 aa).

Residues Tyr-40, 65-67, 90-91, 118-119, Asn-133, and Arg-200 contribute to the S-adenosyl-L-methionine site; these read GSS, DN, and DI.

Belongs to the class I-like SAM-binding methyltransferase superfamily. Cx-SAM synthase family. As to quaternary structure, homodimer.

The enzyme catalyses prephenate + S-adenosyl-L-methionine = carboxy-S-adenosyl-L-methionine + 3-phenylpyruvate + H2O. In terms of biological role, catalyzes the conversion of S-adenosyl-L-methionine (SAM) to carboxy-S-adenosyl-L-methionine (Cx-SAM). This Shewanella denitrificans (strain OS217 / ATCC BAA-1090 / DSM 15013) protein is Carboxy-S-adenosyl-L-methionine synthase.